Reading from the N-terminus, the 25-residue chain is Neuromedin-U-25 (25 aa).

Asn-25 carries the asparagine amide modification.

Belongs to the NmU family.

The protein localises to the secreted. Its function is as follows. Stimulates uterine smooth muscle contraction and causes selective vasoconstriction. In Rana temporaria (European common frog), this protein is Neuromedin-U-25.